Here is a 508-residue protein sequence, read N- to C-terminus: Mu-like prophage FluMu protein gp28 (508 aa).

The protein to phage Mu protein gp28.

In Haemophilus influenzae (strain ATCC 51907 / DSM 11121 / KW20 / Rd), this protein is Mu-like prophage FluMu protein gp28.